The following is a 505-amino-acid chain: AMP phosphorylase 2 (505 aa).

AMP is bound by residues Gly169, 195 to 200, Thr204, Ser265, and Lys289; that span reads SRAITT.

The protein belongs to the thymidine/pyrimidine-nucleoside phosphorylase family. Type 2 subfamily.

The catalysed reaction is AMP + phosphate = alpha-D-ribose 1,5-bisphosphate + adenine. It carries out the reaction CMP + phosphate = cytosine + alpha-D-ribose 1,5-bisphosphate. The enzyme catalyses UMP + phosphate = alpha-D-ribose 1,5-bisphosphate + uracil. Catalyzes the conversion of AMP and phosphate to adenine and ribose 1,5-bisphosphate (R15P). Exhibits phosphorylase activity toward CMP and UMP in addition to AMP. Functions in an archaeal AMP degradation pathway, together with R15P isomerase and RubisCO. In Archaeoglobus fulgidus (strain ATCC 49558 / DSM 4304 / JCM 9628 / NBRC 100126 / VC-16), this protein is AMP phosphorylase 2.